The primary structure comprises 721 residues: MPRGSEAGYCCLSRDSNMPDSRDDQQQGASLGTSQDNSQTSSLIDGQTLSKESPSHGLELSAPEKARAASLDGAEEALWTTRADGRVRLRLEPFCTQRPYTVHQMFYEALDKYGNLSALGFKRKDKWERISYYQYYLIARKVAKGFLKLGLERAHSVAILGFNSPEWFFSAVGTVFAGGIVTGIYTTSSPEACQYISHDCRANVIVVDTQKQLEKILKIWKDLPHLKAVVIYQEPPPKKMANVYTMEELIELGQEVPEEALDAIIDTQQPNQCCVLVYTSGTTGNPKGVMLSQDNITWTARYGSQAGDIQPAEVQQEVVVSYLPLSHIAAQIYDLWTGIQWGAQVCFADPDALKGTLVNTLREVEPTSHMGVPRVWEKIMERIQEVAAQSGFIRRKMLLWAMSVTLEQNLTCPSNDLKPFTSRLADYLVLARVRQALGFAKCQKNFYGAAPMTAETQRFFLGLNIRLYAGYGLSESTGPHFMSSPYNYRLYSSGRVVPGCRVKLVNQDADGIGEICLWGRTIFMGYLNMEDKTCEAIDSEGWLHTGDMGRLDADGFLYITGRLKELIITAGGENVPPVPIEEAVKMELPIISSAMLIGDQRKFLSMLLTLKCTLDPETSEPTDSLTEQAVEFCQRVGSKASTVSEIVGQRDEAVYQAIHEGIQRVNANAAARPYHIQKWAILQRDFSISGGELGPTMKLKRLTVLEKYKDIIDSFYQEQKQ.

Residues methionine 1 to glutamate 64 are disordered. Polar residues predominate over residues glutamine 26–glutamate 52. 4 positions are modified to phosphoserine: serine 34, serine 50, serine 53, and serine 70. ATP contacts are provided by residues threonine 279–lysine 287, alanine 469–serine 474, aspartate 547, and arginine 562. A Phosphotyrosine modification is found at tyrosine 655. Lysine 698 provides a ligand contact to ATP.

It belongs to the ATP-dependent AMP-binding enzyme family. Bubblegum subfamily. As to expression, mainly expressed in brain. Also expressed in adrenal gland and testis. In brain, it is present in cerebral cortical and cerebellar neurons and in steroidogenic cells of the adrenal gland, testis and ovary (at protein level).

The protein localises to the cytoplasm. It localises to the cytoplasmic vesicle. The protein resides in the microsome. Its subcellular location is the endoplasmic reticulum. It is found in the cell membrane. It carries out the reaction a long-chain fatty acid + ATP + CoA = a long-chain fatty acyl-CoA + AMP + diphosphate. The catalysed reaction is (E)-hexadec-2-enoate + ATP + CoA = (2E)-hexadecenoyl-CoA + AMP + diphosphate. The enzyme catalyses hexadecanoate + ATP + CoA = hexadecanoyl-CoA + AMP + diphosphate. Catalyzes the conversion of fatty acids such as long-chain and very long-chain fatty acids to their active form acyl-CoAs for both synthesis of cellular lipids, and degradation via beta-oxidation. Can activate diverse saturated, monosaturated and polyunsaturated fatty acids. The polypeptide is Long-chain-fatty-acid--CoA ligase ACSBG1 (Mus musculus (Mouse)).